The following is a 601-amino-acid chain: Glutamyl-tRNA(Gln) amidotransferase subunit B, mitochondrial (601 aa).

The transit peptide at 1 to 52 (MLQQWLRQSPRAARVLRGSCCRGPQSGSLRHSPLPTAPHRCIRSLQTSATES) directs the protein to the mitochondrion.

It belongs to the GatB/GatE family. GatB subfamily. In terms of assembly, subunit of the heterotrimeric GatCAB amidotransferase (AdT) complex, composed of A, B and C subunits.

The protein localises to the mitochondrion. The catalysed reaction is L-glutamyl-tRNA(Gln) + L-glutamine + ATP + H2O = L-glutaminyl-tRNA(Gln) + L-glutamate + ADP + phosphate + H(+). Its function is as follows. Allows the formation of correctly charged Gln-tRNA(Gln) through the transamidation of misacylated Glu-tRNA(Gln) in the mitochondria. The reaction takes place in the presence of glutamine and ATP through an activated gamma-phospho-Glu-tRNA(Gln). In Aspergillus fumigatus (strain ATCC MYA-4609 / CBS 101355 / FGSC A1100 / Af293) (Neosartorya fumigata), this protein is Glutamyl-tRNA(Gln) amidotransferase subunit B, mitochondrial.